Consider the following 354-residue polypeptide: UDP-N-acetylglucosamine--N-acetylmuramyl-(pentapeptide) pyrophosphoryl-undecaprenol N-acetylglucosamine transferase (354 aa).

Residues 15–17 (TGG), Asn-127, Arg-163, Ser-191, Ile-244, 263–268 (ALTVSE), and Gln-288 contribute to the UDP-N-acetyl-alpha-D-glucosamine site.

The protein belongs to the glycosyltransferase 28 family. MurG subfamily.

The protein resides in the cell inner membrane. It catalyses the reaction di-trans,octa-cis-undecaprenyl diphospho-N-acetyl-alpha-D-muramoyl-L-alanyl-D-glutamyl-meso-2,6-diaminopimeloyl-D-alanyl-D-alanine + UDP-N-acetyl-alpha-D-glucosamine = di-trans,octa-cis-undecaprenyl diphospho-[N-acetyl-alpha-D-glucosaminyl-(1-&gt;4)]-N-acetyl-alpha-D-muramoyl-L-alanyl-D-glutamyl-meso-2,6-diaminopimeloyl-D-alanyl-D-alanine + UDP + H(+). It functions in the pathway cell wall biogenesis; peptidoglycan biosynthesis. Its function is as follows. Cell wall formation. Catalyzes the transfer of a GlcNAc subunit on undecaprenyl-pyrophosphoryl-MurNAc-pentapeptide (lipid intermediate I) to form undecaprenyl-pyrophosphoryl-MurNAc-(pentapeptide)GlcNAc (lipid intermediate II). This Aliivibrio fischeri (strain MJ11) (Vibrio fischeri) protein is UDP-N-acetylglucosamine--N-acetylmuramyl-(pentapeptide) pyrophosphoryl-undecaprenol N-acetylglucosamine transferase.